Consider the following 161-residue polypeptide: Lincosamide resistance protein (161 aa).

This Staphylococcus haemolyticus protein is Lincosamide resistance protein (linA).